Reading from the N-terminus, the 515-residue chain is Methionine--tRNA ligase (515 aa).

The 'HIGH' region signature appears at 13–23; that stretch reads AYPNGKPHIGH. Positions 300–304 match the 'KMSKS' region motif; the sequence is KMSKS. K303 provides a ligand contact to ATP.

Belongs to the class-I aminoacyl-tRNA synthetase family. MetG type 2B subfamily. Monomer.

The protein localises to the cytoplasm. The catalysed reaction is tRNA(Met) + L-methionine + ATP = L-methionyl-tRNA(Met) + AMP + diphosphate. Its function is as follows. Is required not only for elongation of protein synthesis but also for the initiation of all mRNA translation through initiator tRNA(fMet) aminoacylation. This Brucella melitensis biotype 1 (strain ATCC 23456 / CCUG 17765 / NCTC 10094 / 16M) protein is Methionine--tRNA ligase.